A 457-amino-acid chain; its full sequence is Bifunctional protein GlmU (457 aa).

A pyrophosphorylase region spans residues 1–230; the sequence is MSKRYAVVLA…FEESLGVNDR (230 aa). Residues 9-12, lysine 23, glutamine 73, and 78-79 contribute to the UDP-N-acetyl-alpha-D-glucosamine site; these read LAAG and GT. Aspartate 103 is a Mg(2+) binding site. Positions 140, 155, 170, and 228 each coordinate UDP-N-acetyl-alpha-D-glucosamine. Mg(2+) is bound at residue asparagine 228. Positions 231-251 are linker; it reads IALAEASRLMQRRINENHMRN. The N-acetyltransferase stretch occupies residues 252-457; that stretch reads GVTLVNPENT…GYAKHLNHGK (206 aa). The UDP-N-acetyl-alpha-D-glucosamine site is built by arginine 333 and lysine 351. Histidine 363 acts as the Proton acceptor in catalysis. Positions 366 and 377 each coordinate UDP-N-acetyl-alpha-D-glucosamine. Residues 386-387, alanine 423, and arginine 440 each bind acetyl-CoA; that span reads NY.

The protein in the N-terminal section; belongs to the N-acetylglucosamine-1-phosphate uridyltransferase family. It in the C-terminal section; belongs to the transferase hexapeptide repeat family. As to quaternary structure, homotrimer. Mg(2+) serves as cofactor.

It is found in the cytoplasm. It catalyses the reaction alpha-D-glucosamine 1-phosphate + acetyl-CoA = N-acetyl-alpha-D-glucosamine 1-phosphate + CoA + H(+). The enzyme catalyses N-acetyl-alpha-D-glucosamine 1-phosphate + UTP + H(+) = UDP-N-acetyl-alpha-D-glucosamine + diphosphate. The protein operates within nucleotide-sugar biosynthesis; UDP-N-acetyl-alpha-D-glucosamine biosynthesis; N-acetyl-alpha-D-glucosamine 1-phosphate from alpha-D-glucosamine 6-phosphate (route II): step 2/2. It functions in the pathway nucleotide-sugar biosynthesis; UDP-N-acetyl-alpha-D-glucosamine biosynthesis; UDP-N-acetyl-alpha-D-glucosamine from N-acetyl-alpha-D-glucosamine 1-phosphate: step 1/1. It participates in bacterial outer membrane biogenesis; LPS lipid A biosynthesis. Its function is as follows. Catalyzes the last two sequential reactions in the de novo biosynthetic pathway for UDP-N-acetylglucosamine (UDP-GlcNAc). The C-terminal domain catalyzes the transfer of acetyl group from acetyl coenzyme A to glucosamine-1-phosphate (GlcN-1-P) to produce N-acetylglucosamine-1-phosphate (GlcNAc-1-P), which is converted into UDP-GlcNAc by the transfer of uridine 5-monophosphate (from uridine 5-triphosphate), a reaction catalyzed by the N-terminal domain. The polypeptide is Bifunctional protein GlmU (Listeria monocytogenes serotype 4b (strain F2365)).